The following is a 393-amino-acid chain: Cytochrome b (393 aa).

The next 4 helical transmembrane spans lie at 38–58, 82–104, 119–139, and 185–205; these read FGSL…FLAM, WLLR…LHIF, VWCL…IGYV, and FFSL…LHLA. Residues H88 and H102 each contribute to the heme b site. Heme b contacts are provided by H189 and H203. H208 serves as a coordination point for a ubiquinone. A run of 4 helical transmembrane segments spans residues 231 to 251, 295 to 315, 327 to 347, and 354 to 373; these read FYVK…IWIF, VGGV…PFFK, IYQG…WIGC, and FVTI…AITP.

It belongs to the cytochrome b family. As to quaternary structure, the main subunits of complex b-c1 are: cytochrome b, cytochrome c1 and the Rieske protein. It depends on heme b as a cofactor. Post-translationally, first mitochondrial-encoded protein to be shown to have its N-terminal methionine cleaved off.

The protein resides in the mitochondrion inner membrane. Component of the ubiquinol-cytochrome c reductase complex (complex III or cytochrome b-c1 complex) that is part of the mitochondrial respiratory chain. The b-c1 complex mediates electron transfer from ubiquinol to cytochrome c. Contributes to the generation of a proton gradient across the mitochondrial membrane that is then used for ATP synthesis. In Solanum tuberosum (Potato), this protein is Cytochrome b (MT-CYB).